Consider the following 190-residue polypeptide: MNTLQLINKNHPLKKNQEPPHLVLAPFSDHDVYLQPEVAKQWERLVRATGLEKDIRLVDGYRTEKEQRRLWEYSLKENGLAYTKQFVALPGCSEHQIGLAIDVGLKKQEDDDLICPHFRDSAAADLFMQQMMNYGFILRYPEDKQEITGISYEPWHFRYVGLPHSQVITAQKWTLEEYHDYLAQTVRQFA.

Glu66 provides a ligand contact to Mg(2+). Gln67, Ala88, Ser93, His95, and Asp102 together coordinate a dipeptide. Cu(2+) contacts are provided by His95 and Asp102. Residues His95 and Asp102 each contribute to the Zn(2+) site. Glu153 functions as the catalytic acid/base residue in the catalytic mechanism. Positions 155 and 156 each coordinate a dipeptide. His156 is a Cu(2+) binding site. A Zn(2+)-binding site is contributed by His156.

The protein belongs to the peptidase M15D family. As to quaternary structure, homodimer.

The protein resides in the cytoplasm. It carries out the reaction D-alanyl-D-alanine + H2O = 2 D-alanine. The catalysed reaction is UDP-N-acetyl-alpha-D-muramoyl-L-alanyl-gamma-D-glutamyl-L-lysyl-D-alanyl-D-alanine + H2O = UDP-N-acetyl-alpha-D-muramoyl-L-alanyl-gamma-D-glutamyl-L-lysyl-D-alanine + D-alanine. Its function is as follows. Bifunctional enzyme, exhibiting dipeptidase and carboxypeptidase activities. Catalyzes hydrolysis of the D-alanyl-D-alanine dipeptide. Cleaves the C-terminal D-alanine residue of UDP-muramyl-pentapeptide[Ala] (UDP-MurNAc-L-Ala-D-Glu-L-Lys-D-Ala-D-Ala). Shows no activity against the pentapeptide with a C-terminal D-serine residue. Together with VanC/VanC1 and VanT, required for vancomycin resistance in E.gallinarum strain BM4174. The protein is Bifunctional D-Ala-D-Ala dipeptidase and D-Ala-D-Ala carboxypeptidase VanXYC of Enterococcus gallinarum.